The primary structure comprises 282 residues: Undecaprenyl-diphosphatase 1 (282 aa).

The next 8 helical transmembrane spans lie at 1 to 21, 46 to 66, 91 to 111, 117 to 137, 150 to 170, 193 to 213, 226 to 246, and 260 to 280; these read MLLLQIVVLALIQGITEVLPL, GVALDVAVHLGTLGAVALYFW, AFLVVLGTLPAVATVLLLAHF, SPGLATIGWTTLGFGLLLGVI, MGGIDCLLIGLAQCLALLPGV, FSMLLSIPAIAGAATLVGLDL, LIAAVTAFLAAFLAVAAMMAW, and VLLGAALLALAYLGPDLAPFL.

The protein belongs to the UppP family.

The protein resides in the cell inner membrane. The catalysed reaction is di-trans,octa-cis-undecaprenyl diphosphate + H2O = di-trans,octa-cis-undecaprenyl phosphate + phosphate + H(+). Catalyzes the dephosphorylation of undecaprenyl diphosphate (UPP). Confers resistance to bacitracin. The sequence is that of Undecaprenyl-diphosphatase 1 from Rhodospirillum rubrum (strain ATCC 11170 / ATH 1.1.1 / DSM 467 / LMG 4362 / NCIMB 8255 / S1).